We begin with the raw amino-acid sequence, 172 residues long: Translation initiation factor IF-3 (172 aa).

Belongs to the IF-3 family. Monomer.

Its subcellular location is the cytoplasm. Its function is as follows. IF-3 binds to the 30S ribosomal subunit and shifts the equilibrium between 70S ribosomes and their 50S and 30S subunits in favor of the free subunits, thus enhancing the availability of 30S subunits on which protein synthesis initiation begins. In Campylobacter concisus (strain 13826), this protein is Translation initiation factor IF-3.